A 234-amino-acid chain; its full sequence is Transcription factor UDT1 (234 aa).

The tract at residues 1-51 is disordered; that stretch reads MPRRARARGGGGGGGEEVKVEDDFIDSVLNFGGGGGGEEDGDDGEEEQQQQ. A compositionally biased stretch (acidic residues) spans 37-48; it reads GEEDGDDGEEEQ. The basic motif; degenerate stretch occupies residues 61–74; it reads EFKSKNLEAERRRR. The region spanning 61–110 is the bHLH domain; sequence EFKSKNLEAERRRRGRLNGNIFALRAVVPKITKMSKEATLSDAIEHIKNL. The segment at 75 to 110 is helix-loop-helix motif; it reads GRLNGNIFALRAVVPKITKMSKEATLSDAIEHIKNL.

The protein belongs to the bHLH protein family.

The protein localises to the nucleus. Its function is as follows. Transcription factor that plays a crucial role in tapetum development. Required for male fertility and pollen differentiation within the developing anther. Plays a major role in maintaining tapetum development, starting in early meiosis. Required for pollen mother cell meiosis. May regulate the anther-specific cysteine protease CP1 and lipid-transfer proteins C4 and C6. Required for anther development. Functions in parallel with GAMYB to regulate early anther development. Functions upstream of the transcription factor TDR and may positively regulate its transcription. The polypeptide is Transcription factor UDT1 (Oryza sativa subsp. japonica (Rice)).